We begin with the raw amino-acid sequence, 283 residues long: uncharacterized protein (283 aa).

This is an uncharacterized protein from Caenorhabditis elegans.